Consider the following 152-residue polypeptide: Large-conductance mechanosensitive channel (152 aa).

Transmembrane regions (helical) follow at residues 14 to 34 (VIDL…VTSL) and 81 to 101 (GLFL…FIVI).

It belongs to the MscL family. As to quaternary structure, homopentamer.

The protein resides in the cell membrane. In terms of biological role, channel that opens in response to stretch forces in the membrane lipid bilayer. May participate in the regulation of osmotic pressure changes within the cell. The sequence is that of Large-conductance mechanosensitive channel from Clostridium perfringens (strain ATCC 13124 / DSM 756 / JCM 1290 / NCIMB 6125 / NCTC 8237 / Type A).